The sequence spans 662 residues: Probable lysophospholipase 3 (662 aa).

The first 19 residues, methionine 1–alanine 19, serve as a signal peptide directing secretion. Asparagine 74, asparagine 127, asparagine 162, asparagine 196, asparagine 266, asparagine 274, asparagine 303, asparagine 376, asparagine 406, asparagine 411, asparagine 483, asparagine 518, asparagine 523, asparagine 547, asparagine 556, asparagine 574, asparagine 596, and asparagine 613 each carry an N-linked (GlcNAc...) asparagine glycan. In terms of domain architecture, PLA2c spans threonine 76–valine 617.

The protein belongs to the lysophospholipase family.

It is found in the secreted. It catalyses the reaction a 1-acyl-sn-glycero-3-phosphocholine + H2O = sn-glycerol 3-phosphocholine + a fatty acid + H(+). Its function is as follows. Catalyzes the release of fatty acids from lysophospholipids. This is Probable lysophospholipase 3 (plb3) from Schizosaccharomyces pombe (strain 972 / ATCC 24843) (Fission yeast).